We begin with the raw amino-acid sequence, 1335 residues long: Protein SPATA31F1 (1335 aa).

Residues 8 to 28 (LWEVGYPLYIYGSIFIVIVII) form a helical membrane-spanning segment. Disordered stretches follow at residues 403-424 (ALKA…SGSD), 480-502 (LPKT…MSPS), 972-1002 (VQQN…SGDM), 1019-1141 (PSLE…LQDS), and 1248-1335 (ENVA…GHPT). The segment covering 414-424 (SGGQDNDSGSD) has biased composition (polar residues). The span at 972–1000 (VQQNQKQSNSKAVPQGSAHSVSKISQPSG) shows a compositional bias: polar residues. Basic and acidic residues-rich tracts occupy residues 1047-1064 (NRED…REGD), 1071-1083 (STRE…EDQR), and 1129-1139 (PGEKESEKDLQ).

It belongs to the SPATA31 family.

It is found in the membrane. This chain is Protein SPATA31F1, found in Homo sapiens (Human).